A 527-amino-acid chain; its full sequence is MSDLLSRRLALLGAAANLPLLTECLHGIERECLRVDSDGKLALTPHPRALGSTLTHPQITTDYSEALLEFITPTETDVADTLGDLERIHRFASSKLDGEYLWSPSMPCELPDEESIPIARYGSSMIGRLKYVYRKGLALRYGKTMQCIAGIHYNFSLPERLWPLLRQAEGSELSERDYQSAAYIALIRNFRRYSWLLMYLFGASPALDAGFLRGRPSQLERLDEHTLYLPYATSLRMSDLGYQNNAQAGLTPCYNDLQSYIDSLRQAVSTPYPPYEKVGTKQDGEWVQLNTNILQIENEYYSSIRPKRVTYTGERPVQALAARGVQYVEVRCLDINPFLPLGIDLDEARFLDAFLLFCAFSDSPLLNGECSDATDNFLAVVKEGRRPGLQLQRRGQPVELQVWANELLERIADTAALLDRARGGEAHAAALAAQRAKVADAELTPSAQVLKVMRERGESFEAFSLRQSREHAEYFRQHPLAAEEQARFEKMASDSLAEQTELERDQDGDFDTFVAAYQASILGLISN.

This sequence belongs to the glutamate--cysteine ligase type 1 family. Type 1 subfamily.

It carries out the reaction L-cysteine + L-glutamate + ATP = gamma-L-glutamyl-L-cysteine + ADP + phosphate + H(+). The protein operates within sulfur metabolism; glutathione biosynthesis; glutathione from L-cysteine and L-glutamate: step 1/2. The sequence is that of Glutamate--cysteine ligase from Pseudomonas aeruginosa (strain ATCC 15692 / DSM 22644 / CIP 104116 / JCM 14847 / LMG 12228 / 1C / PRS 101 / PAO1).